Here is a 56-residue protein sequence, read N- to C-terminus: Light-harvesting protein B-880 beta chain (56 aa).

At Ala-1–Gly-22 the chain is on the cytoplasmic side. A bacteriochlorophyll is bound by residues His-21 and His-39. A helical transmembrane segment spans residues Val-23–Trp-45. At Arg-46–Ala-56 the chain is on the periplasmic side.

Belongs to the antenna complex beta subunit family. As to quaternary structure, the core complex is formed by different alpha and beta chains, binding bacteriochlorophyll molecules, and arranged most probably in tetrameric structures disposed around the reaction center. The non-pigmented gamma chains may constitute additional components.

It is found in the cell inner membrane. Antenna complexes are light-harvesting systems, which transfer the excitation energy to the reaction centers. In Afifella marina (Rhodobium marinum), this protein is Light-harvesting protein B-880 beta chain.